We begin with the raw amino-acid sequence, 765 residues long: SNF-related serine/threonine-protein kinase (765 aa).

In terms of domain architecture, Protein kinase spans Tyr-16–Leu-269. ATP is bound by residues Leu-22–Val-30 and Lys-45. Asp-139 serves as the catalytic Proton acceptor. Position 162 is a phosphoserine (Ser-162). The residue at position 173 (Thr-173) is a Phosphothreonine; by LKB1. The 44-residue stretch at Ser-291–Glu-334 folds into the UBA domain. 5 positions are modified to phosphoserine: Ser-362, Ser-390, Ser-482, Ser-495, and Ser-518. Residues Leu-512–Gln-634 form a disordered region. Basic residues predominate over residues Val-522–Gln-532. The segment covering Gly-533–Glu-542 has biased composition (low complexity). Arg-534 carries the post-translational modification Omega-N-methylarginine. The span at Glu-549 to Ser-558 shows a compositional bias: basic and acidic residues. Positions Ala-603–Gly-614 are enriched in gly residues. Ser-607 carries the post-translational modification Phosphoserine.

It belongs to the protein kinase superfamily. CAMK Ser/Thr protein kinase family. Mg(2+) serves as cofactor. Autophosphorylated. Phosphorylation on Thr-173 by STK11/LKB1 in complex with STE20-related adapter-alpha (STRADA) pseudo kinase and CAB39. Expressed in hematopoietic progenitor cells and leukemic cell lines. Weakly expressed in the testis.

The protein resides in the nucleus. The enzyme catalyses L-seryl-[protein] + ATP = O-phospho-L-seryl-[protein] + ADP + H(+). It catalyses the reaction L-threonyl-[protein] + ATP = O-phospho-L-threonyl-[protein] + ADP + H(+). Activated by phosphorylation on Thr-173. May play a role in hematopoietic cell proliferation or differentiation. Potential mediator of neuronal apoptosis. The polypeptide is SNF-related serine/threonine-protein kinase (Homo sapiens (Human)).